A 1169-amino-acid chain; its full sequence is Transcription-repair-coupling factor (1169 aa).

Residues 634 to 795 enclose the Helicase ATP-binding domain; the sequence is DMERERPMDR…MLGVRDLSVI (162 aa). ATP is bound at residue 647–654; it reads GDVGYGKT. The DEEQ box signature appears at 748–751; sequence DEEQ. One can recognise a Helicase C-terminal domain in the interval 809 to 970; that stretch reads VLEQNSNFIK…GFKIAMRDLN (162 aa).

This sequence in the N-terminal section; belongs to the UvrB family. The protein in the C-terminal section; belongs to the helicase family. RecG subfamily.

The protein localises to the cytoplasm. Couples transcription and DNA repair by recognizing RNA polymerase (RNAP) stalled at DNA lesions. Mediates ATP-dependent release of RNAP and its truncated transcript from the DNA, and recruitment of nucleotide excision repair machinery to the damaged site. This chain is Transcription-repair-coupling factor, found in Staphylococcus haemolyticus (strain JCSC1435).